The following is a 636-amino-acid chain: Topoisomerase I damage affected protein 7 (636 aa).

Residues Met-1–Ile-18 are compositionally biased toward polar residues. Disordered regions lie at residues Met-1–Ser-33, Thr-87–Pro-109, Asn-246–Asn-271, Pro-299–Thr-326, and Gln-339–Pro-362. N-linked (GlcNAc...) asparagine glycosylation is present at Asn-4. Composition is skewed to low complexity over residues Ser-19–Ser-33 and Thr-87–Asp-108. A glycan (N-linked (GlcNAc...) asparagine) is linked at Asn-257. The chain crosses the membrane as a helical span at residues Ile-457–Phe-477. The N-linked (GlcNAc...) asparagine glycan is linked to Asn-492. Polar residues predominate over residues Gln-510–Phe-541. The tract at residues Gln-510–Pro-551 is disordered. Lys-512 participates in a covalent cross-link: Glycyl lysine isopeptide (Lys-Gly) (interchain with G-Cter in ubiquitin). Asn-557, Asn-562, and Asn-626 each carry an N-linked (GlcNAc...) asparagine glycan. Position 628 is a phosphoserine (Ser-628).

Belongs to the TDA7 family.

It is found in the vacuole membrane. The protein is Topoisomerase I damage affected protein 7 (TDA7) of Saccharomyces cerevisiae (strain ATCC 204508 / S288c) (Baker's yeast).